The chain runs to 314 residues: Methionyl-tRNA formyltransferase (314 aa).

113 to 116 (SLLP) contributes to the (6S)-5,6,7,8-tetrahydrofolate binding site.

The protein belongs to the Fmt family.

It catalyses the reaction L-methionyl-tRNA(fMet) + (6R)-10-formyltetrahydrofolate = N-formyl-L-methionyl-tRNA(fMet) + (6S)-5,6,7,8-tetrahydrofolate + H(+). Attaches a formyl group to the free amino group of methionyl-tRNA(fMet). The formyl group appears to play a dual role in the initiator identity of N-formylmethionyl-tRNA by promoting its recognition by IF2 and preventing the misappropriation of this tRNA by the elongation apparatus. The sequence is that of Methionyl-tRNA formyltransferase from Pseudomonas aeruginosa (strain UCBPP-PA14).